Consider the following 227-residue polypeptide: NADH-quinone oxidoreductase subunit C (227 aa).

It belongs to the complex I 30 kDa subunit family. As to quaternary structure, NDH-1 is composed of 14 different subunits. Subunits NuoB, C, D, E, F, and G constitute the peripheral sector of the complex.

Its subcellular location is the cell inner membrane. The catalysed reaction is a quinone + NADH + 5 H(+)(in) = a quinol + NAD(+) + 4 H(+)(out). Functionally, NDH-1 shuttles electrons from NADH, via FMN and iron-sulfur (Fe-S) centers, to quinones in the respiratory chain. The immediate electron acceptor for the enzyme in this species is believed to be ubiquinone. Couples the redox reaction to proton translocation (for every two electrons transferred, four hydrogen ions are translocated across the cytoplasmic membrane), and thus conserves the redox energy in a proton gradient. This is NADH-quinone oxidoreductase subunit C from Coxiella burnetii (strain Dugway 5J108-111).